A 320-amino-acid polypeptide reads, in one-letter code: Tyrosine recombinase XerC (320 aa).

A Core-binding (CB) domain is found at 14–104 (ADVREAVASW…SLRSFARHLE (91 aa)). Residues 125–311 (RLPRPLPVAA…DSARLMSAFE (187 aa)) form the Tyr recombinase domain. Catalysis depends on residues Arg170, Lys195, His263, Arg266, and His289. Tyr298 functions as the O-(3'-phospho-DNA)-tyrosine intermediate in the catalytic mechanism.

This sequence belongs to the 'phage' integrase family. XerC subfamily. In terms of assembly, forms a cyclic heterotetrameric complex composed of two molecules of XerC and two molecules of XerD.

It is found in the cytoplasm. Site-specific tyrosine recombinase, which acts by catalyzing the cutting and rejoining of the recombining DNA molecules. The XerC-XerD complex is essential to convert dimers of the bacterial chromosome into monomers to permit their segregation at cell division. It also contributes to the segregational stability of plasmids. The polypeptide is Tyrosine recombinase XerC (Methylobacterium sp. (strain 4-46)).